A 263-amino-acid polypeptide reads, in one-letter code: ATP synthase subunit delta (263 aa).

It belongs to the ATPase delta chain family. In terms of assembly, F-type ATPases have 2 components, F(1) - the catalytic core - and F(0) - the membrane proton channel. F(1) has five subunits: alpha(3), beta(3), gamma(1), delta(1), epsilon(1). F(0) has three main subunits: a(1), b(2) and c(10-14). The alpha and beta chains form an alternating ring which encloses part of the gamma chain. F(1) is attached to F(0) by a central stalk formed by the gamma and epsilon chains, while a peripheral stalk is formed by the delta and b chains.

The protein localises to the cell membrane. Its function is as follows. F(1)F(0) ATP synthase produces ATP from ADP in the presence of a proton or sodium gradient. F-type ATPases consist of two structural domains, F(1) containing the extramembraneous catalytic core and F(0) containing the membrane proton channel, linked together by a central stalk and a peripheral stalk. During catalysis, ATP synthesis in the catalytic domain of F(1) is coupled via a rotary mechanism of the central stalk subunits to proton translocation. This protein is part of the stalk that links CF(0) to CF(1). It either transmits conformational changes from CF(0) to CF(1) or is implicated in proton conduction. The polypeptide is ATP synthase subunit delta (Leifsonia xyli subsp. xyli (strain CTCB07)).